Consider the following 307-residue polypeptide: Sesquiterpene synthase-like protein Agr10 (307 aa).

The segment at Gly-287–Arg-307 is disordered. The span at Glu-296 to Arg-307 shows a compositional bias: polar residues.

The protein belongs to the terpene synthase family.

The protein is Sesquiterpene synthase-like protein Agr10 of Cyclocybe aegerita (Black poplar mushroom).